The primary structure comprises 362 residues: DNA polymerase IV (362 aa).

A UmuC domain is found at Ile-6–Gly-187. Mg(2+)-binding residues include Asp-10 and Asp-105. The active site involves Glu-106.

It belongs to the DNA polymerase type-Y family. In terms of assembly, monomer. It depends on Mg(2+) as a cofactor.

The protein localises to the cytoplasm. It catalyses the reaction DNA(n) + a 2'-deoxyribonucleoside 5'-triphosphate = DNA(n+1) + diphosphate. Its function is as follows. Poorly processive, error-prone DNA polymerase involved in untargeted mutagenesis. Copies undamaged DNA at stalled replication forks, which arise in vivo from mismatched or misaligned primer ends. These misaligned primers can be extended by PolIV. Exhibits no 3'-5' exonuclease (proofreading) activity. May be involved in translesional synthesis, in conjunction with the beta clamp from PolIII. In Leptospira interrogans serogroup Icterohaemorrhagiae serovar copenhageni (strain Fiocruz L1-130), this protein is DNA polymerase IV.